Here is a 747-residue protein sequence, read N- to C-terminus: Superkiller protein 7 (747 aa).

Residues Lys14–Lys51 form a disordered region. The span at Ala21 to Ala31 shows a compositional bias: polar residues. Residues Glu35–Lys51 are compositionally biased toward basic and acidic residues. Residues Ser88 and Ser90 each carry the phosphoserine modification. Positions Asn89–Asp117 are disordered. A tr-type G domain is found at Pro265–Thr503. The G1 stretch occupies residues Gly274 to Ser281. Gly274 to Ser281 is a binding site for GTP. Positions Gly331 to Phe335 are G2. The tract at residues Asp356 to Gly359 is G3. GTP contacts are provided by residues Asp356–Ser360 and Asn427–Asp430. The interval Asn427 to Asp430 is G4. A G5 region spans residues Ser467–Leu469.

The protein belongs to the TRAFAC class translation factor GTPase superfamily. Classic translation factor GTPase family. As to quaternary structure, interacts with the exosome and with the SKI complex composed of at least SKI2, SKI3 and SKI8. Interacts directly with SKI3 and SKI8.

The protein resides in the cytoplasm. Functionally, represses the expression of non-poly(A) mRNAs like L-A or M viruses and is therefore involved in antiviral system. Mediates interactions via its N-terminus between the exosome and the SKI complex which operate in the 3'-to-5' mRNA-decay pathway. By interacting with NAM7, is also required for nonsense-mediated 3'-to-5' mRNA-decay (NMD). May recognize a stalled 80S ribosome at the 3'-end of a nonstop mRNA which leads to the recruitment of the exosome and SKI complexes to the mRNAs to be degraded. The polypeptide is Superkiller protein 7 (SKI7) (Saccharomyces cerevisiae (strain ATCC 204508 / S288c) (Baker's yeast)).